The sequence spans 139 residues: Short neuropeptide F (139 aa).

Residues 1 to 23 constitute a propeptide that is removed on maturation; that stretch reads MGRARRTVRAPAQHDALGGHALA. The segment at 1-48 is disordered; it reads MGRARRTVRAPAQHDALGGHALARKSVRSPSRRLRFGRRSDPDMPPQA. A compositionally biased stretch (basic residues) spans 22–37; it reads LARKSVRSPSRRLRFG. Phe36 carries the post-translational modification Phenylalanine amide. Residues 40–62 constitute a propeptide that is removed on maturation; the sequence is SDPDMPPQAPLDEMNELLSLREV. At Phe70 the chain carries Phenylalanine amide. Residues 74–96 constitute a propeptide that is removed on maturation; the sequence is SEERAVPHIFPQEFLTQEQDRAV. A Phenylalanine amide modification is found at Phe105. The propeptide occupies 109 to 139; the sequence is SDNNMFLLPYESALPQEVKANGSVEDDRQQE.

Belongs to the NPY family. As to expression, sNPF peptide 1: Expressed in corpora cardiaca (CC), corpora allata (CA), antennal lobe (AL) and gnathal ganglion (GNG) (at protein level). Expression in AL detected in all animals, in GNG in most animals, expression in CC and CA in some animals (at protein level). sNPF peptide 2: Expressed in corpora cardiaca (CC), corpora allata (CA), antennal lobe (AL) and gnathal ganglion (GNG) (at protein level). Expression in AL detected in all animals, in GNG, CC and CA in most animals (at protein level). sNPF peptide 3: Expressed in corpora cardiaca (CC), corpora allata (CA), antennal lobe (AL) and gnathal ganglion (GNG) (at protein level). Expression detected in all animals (at protein level).

It is found in the secreted. Functionally, plays a role in controlling food intake and regulating body size. This chain is Short neuropeptide F, found in Agrotis ipsilon (Black cutworm moth).